The following is a 276-amino-acid chain: Pantothenate synthetase (276 aa).

An ATP-binding site is contributed by 27 to 34 (MGALHKGH). His34 functions as the Proton donor in the catalytic mechanism. Residue Gln58 coordinates (R)-pantoate. Gln58 is a binding site for beta-alanine. 147–150 (GKKD) is an ATP binding site. Residue Gln153 participates in (R)-pantoate binding. Residues Val176 and 184-187 (LSSR) each bind ATP.

The protein belongs to the pantothenate synthetase family. Homodimer.

The protein localises to the cytoplasm. The catalysed reaction is (R)-pantoate + beta-alanine + ATP = (R)-pantothenate + AMP + diphosphate + H(+). Its pathway is cofactor biosynthesis; (R)-pantothenate biosynthesis; (R)-pantothenate from (R)-pantoate and beta-alanine: step 1/1. Functionally, catalyzes the condensation of pantoate with beta-alanine in an ATP-dependent reaction via a pantoyl-adenylate intermediate. The chain is Pantothenate synthetase from Helicobacter pylori (strain Shi470).